A 561-amino-acid polypeptide reads, in one-letter code: Terpene synthase 3 (561 aa).

Mg(2+)-binding residues include aspartate 315, aspartate 319, aspartate 458, and glutamate 466. A DDXXD motif motif is present at residues 315 to 319 (DDVYD).

The protein belongs to the terpene synthase family. Tpsa subfamily. Requires Mg(2+) as cofactor. It depends on Mn(2+) as a cofactor. In terms of tissue distribution, mostly expressed in stems amd leaves, and, to a lower extent, in roots and fruits.

It carries out the reaction (2E,6E)-farnesyl diphosphate = germacrene D + diphosphate. The enzyme catalyses (2E,6E)-farnesyl diphosphate = alpha-copaene + diphosphate. The protein operates within secondary metabolite biosynthesis; terpenoid biosynthesis. In terms of biological role, sesquiterpene synthase involved in the biosynthesis of volatile compounds that contribute to the characteristic flavors of black pepper. Mediates the conversion of (2E,6E)-farnesyl diphosphate (FPP) into alpha-copaene and germacrene D. This Piper nigrum (Black pepper) protein is Terpene synthase 3.